Consider the following 160-residue polypeptide: Cathelin-related peptide SC5 (160 aa).

Residues 1-29 form the signal peptide; that stretch reads METQRASLSLGRCSLWLLLLGLALPSASA. The propeptide occupies 30-131; sequence QVLSYREAVL…DITCAEPQSV (102 aa). 2 cysteine pairs are disulfide-bonded: C86-C97 and C108-C125.

The protein belongs to the cathelicidin family.

The protein resides in the secreted. Broad spectrum bactericidal agent. The chain is Cathelin-related peptide SC5 from Ovis aries (Sheep).